We begin with the raw amino-acid sequence, 333 residues long: Terminal uridylyltransferase 4 (333 aa).

UTP is bound by residues Ser-54 and 65-68 (SDVD). Residues Asp-66 and Asp-68 each contribute to the Mg(2+) site. Arg-121 provides a ligand contact to RNA. Residues 144–148 (GVRNS), Lys-169, Lys-173, and 188–189 (SY) each bind UTP. The region spanning 237 to 302 (LGTQVLDFLH…WCIEDPYELN (66 aa)) is the PAP-associated domain.

Belongs to the DNA polymerase type-B-like family. As to quaternary structure, monomer. Requires Mg(2+) as cofactor. Mn(2+) is required as a cofactor.

It catalyses the reaction RNA(n) + UTP = RNA(n)-3'-uridine ribonucleotide + diphosphate. Its activity is regulated as follows. The 3' uridylated RNA substrate is involved in the selective incorporation of UTP; UTP binding is favored due to the constraint posed on the positioning of the NTP base by the continuous stacking interactions between Tyr-189 side chain, the bound NTP, and the terminal nucleoside base of the RNA substrate. Terminal uridylyltransferase which, specifically, catalyzes the addition of Us to the 3'-hydroxyl group of single-stranded RNAs with a 3'-terminal U. The sequence is that of Terminal uridylyltransferase 4 from Trypanosoma brucei brucei (strain 927/4 GUTat10.1).